A 202-amino-acid chain; its full sequence is Matrix protein (202 aa).

The disordered stretch occupies residues 13-32 (DEEIPKPGTPSAPPDDDDLW). A PPXY motif motif is present at residues 35–38 (PPEY).

The protein belongs to the lyssavirus matrix protein family. In terms of assembly, homomultimer. Interacts with nucleoprotein and with the cytoplasmic domain of glycoprotein.

The protein resides in the virion membrane. Its subcellular location is the host endomembrane system. Functionally, plays a major role in assembly and budding of virion. Completely covers the ribonucleoprotein coil and keep it in condensed bullet-shaped form. Inhibits viral transcription and stimulates replication. Plays a major role in early induction of TRAIL-mediated apoptosis in infected neurons. The chain is Matrix protein (M) from Lagos bat virus (LBV).